A 282-amino-acid chain; its full sequence is Stress response regulator protein 1 (282 aa).

Low complexity-rich tracts occupy residues 12–30 (NLSRSSSPAAPPTTNHSST) and 45–58 (NSQSDSNSTQSNNN). Disordered stretches follow at residues 12 to 31 (NLSRSSSPAAPPTTNHSSTV), 43 to 84 (DINS…DDED), and 112 to 139 (LTPFDGQTTSPQDSIISSKSSNKSTTVV). Residues 66–77 (SDYNSYTHNQYY) show a composition bias toward polar residues. Positions 125–139 (SIISSKSSNKSTTVV) are enriched in low complexity. The Response regulatory domain maps to 155-273 (SFLIVDDNII…LDFMANSIDD (119 aa)). The residue at position 206 (Asp-206) is a 4-aspartylphosphate.

Its function is as follows. Required for stress adaptation, morphogenesis and virulence. The polypeptide is Stress response regulator protein 1 (SRR1) (Candida albicans (strain SC5314 / ATCC MYA-2876) (Yeast)).